A 332-amino-acid chain; its full sequence is NADH-quinone oxidoreductase subunit H (332 aa).

Helical transmembrane passes span 4 to 24 (FAFFALEALIKCIIIIAIFAS), 44 to 64 (IGPDMVGPFGLIQLVADMIKL), 78 to 98 (FIFAIAPLISAICAFVSLAAI), 120 to 140 (VALLFVIGTSGLCFYAVFLGG), 165 to 185 (VGALALIAIVMLVGSFSLVDI), 194 to 214 (FSWLIFKQPLAFVLFIIALFI), 255 to 275 (IAGAILVTLLFLGGFNSFWII), 279 to 299 (IMMIVKSSFIFFWYFWARAAF), and 312 to 332 (YLILIPLAVLNLLITALAVLL).

It belongs to the complex I subunit 1 family. In terms of assembly, NDH-1 is composed of 14 different subunits. Subunits NuoA, H, J, K, L, M, N constitute the membrane sector of the complex.

It localises to the cell inner membrane. The enzyme catalyses a quinone + NADH + 5 H(+)(in) = a quinol + NAD(+) + 4 H(+)(out). In terms of biological role, NDH-1 shuttles electrons from NADH, via FMN and iron-sulfur (Fe-S) centers, to quinones in the respiratory chain. The immediate electron acceptor for the enzyme in this species is believed to be ubiquinone. Couples the redox reaction to proton translocation (for every two electrons transferred, four hydrogen ions are translocated across the cytoplasmic membrane), and thus conserves the redox energy in a proton gradient. This subunit may bind ubiquinone. This is NADH-quinone oxidoreductase subunit H from Campylobacter jejuni (strain RM1221).